We begin with the raw amino-acid sequence, 194 residues long: Holliday junction branch migration complex subunit RuvA (194 aa).

The interval M1–L64 is domain I. Residues S65–S140 are domain II. The segment at S140–K144 is flexible linker. The interval L145–C194 is domain III.

Belongs to the RuvA family. Homotetramer. Forms an RuvA(8)-RuvB(12)-Holliday junction (HJ) complex. HJ DNA is sandwiched between 2 RuvA tetramers; dsDNA enters through RuvA and exits via RuvB. An RuvB hexamer assembles on each DNA strand where it exits the tetramer. Each RuvB hexamer is contacted by two RuvA subunits (via domain III) on 2 adjacent RuvB subunits; this complex drives branch migration. In the full resolvosome a probable DNA-RuvA(4)-RuvB(12)-RuvC(2) complex forms which resolves the HJ.

It is found in the cytoplasm. In terms of biological role, the RuvA-RuvB-RuvC complex processes Holliday junction (HJ) DNA during genetic recombination and DNA repair, while the RuvA-RuvB complex plays an important role in the rescue of blocked DNA replication forks via replication fork reversal (RFR). RuvA specifically binds to HJ cruciform DNA, conferring on it an open structure. The RuvB hexamer acts as an ATP-dependent pump, pulling dsDNA into and through the RuvAB complex. HJ branch migration allows RuvC to scan DNA until it finds its consensus sequence, where it cleaves and resolves the cruciform DNA. This is Holliday junction branch migration complex subunit RuvA from Xylella fastidiosa (strain M12).